Consider the following 503-residue polypeptide: MSQLKLEEISSVIEEKIKNFELDCDMAEVGKVVSYADGVAKVYGLNGVMSYEVLEFETGDKGVAANLEEDSVGVIVFGFGNNIKEGTSVKRTKSLMKVPVGDAVVGRVLNALGEPIDGKGEIETNEFSLIEQKAPGIMDRKSVHEPLQTGIKAIDALVPIGRGQRELIIGDKQTGKTTVAIDAIINQKGQNVICIYVAIGQKESTVAQVVRKLEEYGAMEYSVVINASASDSAAMQYLAPYSGVAMGEYFRDHARHALIIYDDLSKHAVAYREISLILRRPPGREAFPGDVFYIHSRLLERAAKLCDEKGAGSLTALPIVETQAGDVSAYIPTNIISITDGQIFLETDLFYSGIRPAINVGLSVSRVGGAAQIKATKQVSGTLRLDLAQYRELQAFTQFASDLDEASKKQLERGQRMVEVLKQAPYSPLPIEKQVVIIYAGAKGFLDSVSVKKVVDFEEQLHPFLEAKYPQVLEEIHTKKALDKDLEAMLRKVLEEFKLTYSE.

170 to 177 (GDKQTGKT) contributes to the ATP binding site.

Belongs to the ATPase alpha/beta chains family. F-type ATPases have 2 components, CF(1) - the catalytic core - and CF(0) - the membrane proton channel. CF(1) has five subunits: alpha(3), beta(3), gamma(1), delta(1), epsilon(1). CF(0) has three main subunits: a(1), b(2) and c(9-12). The alpha and beta chains form an alternating ring which encloses part of the gamma chain. CF(1) is attached to CF(0) by a central stalk formed by the gamma and epsilon chains, while a peripheral stalk is formed by the delta and b chains.

It is found in the cell inner membrane. It carries out the reaction ATP + H2O + 4 H(+)(in) = ADP + phosphate + 5 H(+)(out). Functionally, produces ATP from ADP in the presence of a proton gradient across the membrane. The alpha chain is a regulatory subunit. This is ATP synthase subunit alpha from Helicobacter pylori (strain P12).